We begin with the raw amino-acid sequence, 140 residues long: Nucleoside diphosphate kinase (140 aa).

ATP-binding residues include Lys-11, Phe-59, Arg-87, Thr-93, Arg-104, and Asn-114. His-117 functions as the Pros-phosphohistidine intermediate in the catalytic mechanism.

This sequence belongs to the NDK family. As to quaternary structure, homotetramer. It depends on Mg(2+) as a cofactor.

It localises to the cytoplasm. The enzyme catalyses a 2'-deoxyribonucleoside 5'-diphosphate + ATP = a 2'-deoxyribonucleoside 5'-triphosphate + ADP. It carries out the reaction a ribonucleoside 5'-diphosphate + ATP = a ribonucleoside 5'-triphosphate + ADP. Functionally, major role in the synthesis of nucleoside triphosphates other than ATP. The ATP gamma phosphate is transferred to the NDP beta phosphate via a ping-pong mechanism, using a phosphorylated active-site intermediate. The sequence is that of Nucleoside diphosphate kinase from Rhodospirillum centenum (strain ATCC 51521 / SW).